A 240-amino-acid chain; its full sequence is Large ribosomal subunit protein uL1 (240 aa).

This sequence belongs to the universal ribosomal protein uL1 family. Part of the 50S ribosomal subunit.

Binds directly to 23S rRNA. The L1 stalk is quite mobile in the ribosome, and is involved in E site tRNA release. Its function is as follows. Protein L1 is also a translational repressor protein, it controls the translation of the L11 operon by binding to its mRNA. The sequence is that of Large ribosomal subunit protein uL1 from Nocardioides sp. (strain ATCC BAA-499 / JS614).